A 1131-amino-acid polypeptide reads, in one-letter code: DNA polymerase II large subunit (1131 aa).

Belongs to the archaeal DNA polymerase II family. Heterodimer of a large subunit and a small subunit.

The catalysed reaction is DNA(n) + a 2'-deoxyribonucleoside 5'-triphosphate = DNA(n+1) + diphosphate. It carries out the reaction Exonucleolytic cleavage in the 3'- to 5'-direction to yield nucleoside 5'-phosphates.. Functionally, possesses two activities: a DNA synthesis (polymerase) and an exonucleolytic activity that degrades single-stranded DNA in the 3'- to 5'-direction. Has a template-primer preference which is characteristic of a replicative DNA polymerase. The protein is DNA polymerase II large subunit of Methanococcus maripaludis (strain C7 / ATCC BAA-1331).